The following is a 339-amino-acid chain: Small ribosomal subunit biogenesis GTPase RsgA (339 aa).

Residues 111–271 enclose the CP-type G domain; sequence MRGLLKPVAA…LIDSPGIREF (161 aa). GTP-binding positions include 159 to 162 and 213 to 221; these read NKAD and GQSGVGKSS. The Zn(2+) site is built by Cys295, Cys300, His302, and Cys308.

It belongs to the TRAFAC class YlqF/YawG GTPase family. RsgA subfamily. As to quaternary structure, monomer. Associates with 30S ribosomal subunit, binds 16S rRNA. It depends on Zn(2+) as a cofactor.

The protein localises to the cytoplasm. One of several proteins that assist in the late maturation steps of the functional core of the 30S ribosomal subunit. Helps release RbfA from mature subunits. May play a role in the assembly of ribosomal proteins into the subunit. Circularly permuted GTPase that catalyzes slow GTP hydrolysis, GTPase activity is stimulated by the 30S ribosomal subunit. In Pseudomonas aeruginosa (strain LESB58), this protein is Small ribosomal subunit biogenesis GTPase RsgA.